Here is a 2513-residue protein sequence, read N- to C-terminus: Probable polyketide synthase 7 (2513 aa).

Residues 11 to 441 form the Ketosynthase family 3 (KS3) domain; that stretch reads EKGVAIVGIG…GSNCCLLISE (431 aa). Catalysis depends on for beta-ketoacyl synthase activity residues Cys181, His323, and His362. The tract at residues 632–665 is acyl/malonyl transferase; the sequence is GVNPSFILGHSLGEISASYCSGMIDLDTFCYTVY. Residue Ser642 is the For acyl/malonyl transferase activity of the active site. Positions 922 to 1044 are N-terminal hotdog fold; that stretch reads IDHLGISNSF…SNFQLLDHGN (123 aa). Positions 922 to 1206 constitute a PKS/mFAS DH domain; the sequence is IDHLGISNSF…CKSLIPIKDS (285 aa). Catalysis depends on His956, which acts as the Proton acceptor; for dehydratase activity. Residues 1061-1206 are C-terminal hotdog fold; sequence NLSKLTKNEL…CKSLIPIKDS (146 aa). Asp1119 serves as the catalytic Proton donor; for dehydratase activity. The Carrier domain occupies 2426 to 2503; that stretch reads IGNKNIDELF…ISIKMILNSL (78 aa). Ser2463 carries the O-(pantetheine 4'-phosphoryl)serine modification.

Pantetheine 4'-phosphate is required as a cofactor.

Functionally, probable polyketide synthase. The polypeptide is Probable polyketide synthase 7 (pks7) (Dictyostelium discoideum (Social amoeba)).